We begin with the raw amino-acid sequence, 184 residues long: MKKQDISVKTVVAIGIGAAVFVILGRFVVIPTGFPNTNIETSYAFLALISAIFGPFAGLMTGLVGHAIKDFTTYGSAWWSWVICSGIIGCLYGWIGLKLNLSSGRFSRKSMIYFNIGQIIANIICWALIAPTLDILIYNEPANKVYTQGVISAVLNIISVGIIGTILLKAYASSQIKKGSLRKE.

Transmembrane regions (helical) follow at residues 11 to 31 (VVAIGIGAAVFVILGRFVVIP), 44 to 64 (AFLALISAIFGPFAGLMTGLV), 77 to 97 (AWWSWVICSGIIGCLYGWIGL), 111 to 131 (MIYFNIGQIIANIICWALIAP), and 148 to 168 (QGVISAVLNIISVGIIGTILL).

Belongs to the UPF0397 family.

The protein localises to the cell membrane. This Staphylococcus aureus (strain MSSA476) protein is UPF0397 protein SAS2570.